A 299-amino-acid chain; its full sequence is Nucleotide-binding protein glr4163 (299 aa).

18-25 is an ATP binding site; the sequence is SPAGAGRT.

It belongs to the RapZ-like family.

In terms of biological role, displays ATPase and GTPase activities. The polypeptide is Nucleotide-binding protein glr4163 (Gloeobacter violaceus (strain ATCC 29082 / PCC 7421)).